The primary structure comprises 606 residues: Transmembrane 9 superfamily member 1 (606 aa).

Residues 1-27 form the signal peptide; that stretch reads MTVLGHPRSWSCRWWPLLLLLLLTGRE. Residue Asn178 is glycosylated (N-linked (GlcNAc...) asparagine). Transmembrane regions (helical) follow at residues 237-257, 310-330, 339-359, and 373-393; these read LSII…AVIL, VLGV…MALL, GAIN…SGYV, and VWNI…TWSV. A glycan (N-linked (GlcNAc...) asparagine) is linked at Asn401. 4 helical membrane passes run 412-432, 469-489, 499-519, and 535-555; these read ILLL…IGGI, VGGF…FATV, GILF…SIAL, and SVLS…FYYA. N-linked (GlcNAc...) asparagine glycosylation occurs at Asn559. A helical transmembrane segment spans residues 570-590; it reads FGYSLLTGYVFFLMLGTISFF.

Belongs to the nonaspanin (TM9SF) (TC 9.A.2) family.

It localises to the lysosome membrane. The protein resides in the cytoplasmic vesicle. It is found in the autophagosome membrane. In terms of biological role, plays an essential role in autophagy. In Bos taurus (Bovine), this protein is Transmembrane 9 superfamily member 1 (TM9SF1).